The sequence spans 168 residues: Transcriptional repressor NrdR (168 aa).

The segment at 3-34 (CPYCGFAQDRVVDSRESKEADSIRRRRECERC) is a zinc-finger region. The 91-residue stretch at 49–139 (YMVVKKDGRR…VYRDFKDVNE (91 aa)) folds into the ATP-cone domain.

This sequence belongs to the NrdR family. Zn(2+) is required as a cofactor.

In terms of biological role, negatively regulates transcription of bacterial ribonucleotide reductase nrd genes and operons by binding to NrdR-boxes. This Acidobacterium capsulatum (strain ATCC 51196 / DSM 11244 / BCRC 80197 / JCM 7670 / NBRC 15755 / NCIMB 13165 / 161) protein is Transcriptional repressor NrdR.